A 3460-amino-acid polypeptide reads, in one-letter code: Reelin (3460 aa).

The signal sequence occupies residues 1 to 25 (MERSGWARQTFLLALLLGATLRARA). In terms of domain architecture, Reelin spans 26–190 (AAGYYPRFSP…GAPTDVTVHP (165 aa)). Residues Cys40 and Cys126 are joined by a disulfide bond. Asn140 carries N-linked (GlcNAc...) asparagine glycosylation. A disulfide bridge connects residues Cys154 and Cys178. N-linked (GlcNAc...) asparagine glycosylation is found at Asn257, Asn289, and Asn305. A disulfide bridge connects residues Cys539 and Cys580. A BNR 1 repeat occupies 592-603 (EFSTNHGRSWSL). Cys608 and Cys613 are disulfide-bonded. Residue Asn628 is glycosylated (N-linked (GlcNAc...) asparagine). In terms of domain architecture, EGF-like 1 spans 670-701 (IGPSCLKFCSGRGQCTRHGCKCDPGFSGPACE). Disulfide bonds link Cys674/Cys684 and Cys691/Cys700. The stretch at 798–809 (HYSYDNGITWKL) is one BNR 2 repeat. A disulfide bond links Cys894 and Cys936. One copy of the BNR 3 repeat lies at 951 to 962 (EYSTNHGLTWHL). Intrachain disulfides connect Cys967-Cys974, Cys1033-Cys1043, and Cys1050-Cys1059. Positions 1029 to 1060 (IGQQCPNMCSGHGSCDHGICRCDQGYQGTECH) constitute an EGF-like 2 domain. Residues 1156–1167 (QYSNNGGIQWHL) form a BNR 4 repeat. Residue Asn1266 is glycosylated (N-linked (GlcNAc...) asparagine). Residues Cys1270 and Cys1309 are joined by a disulfide bond. The BNR 5 repeat unit spans residues 1322–1333 (QYSHDAGMSWFL). A disulfide bridge connects residues Cys1338 and Cys1347. Positions 1408–1441 (ISEPCPSYCSGHGDCISGVCFCDLGYTAAQGTCV) constitute an EGF-like 3 domain. The BNR 6 repeat unit spans residues 1534-1545 (QYSNDNGILWHL). Asn1599 carries an N-linked (GlcNAc...) asparagine glycan. Cysteines 1632 and 1672 form a disulfide. One copy of the BNR 7 repeat lies at 1685 to 1696 (QYSLNNGKDWHL). A disulfide bond links Cys1701 and Cys1708. The N-linked (GlcNAc...) asparagine glycan is linked to Asn1749. The EGF-like 4 domain occupies 1764-1795 (LASGCPWMCSGRGICDAGRCVCDRGFGGPYCV). A BNR 8 repeat occupies 1883 to 1894 (QFSISGGITWHL). A glycan (N-linked (GlcNAc...) asparagine) is linked at Asn1920. The stretch at 2042–2053 (EFSRDFGATWHL) is one BNR 9 repeat. 2 residues coordinate Zn(2+): His2060 and His2073. Residues 2128 to 2160 (IGPQCEEMCNGQGSCINGTKCICDPGYSGPTCK) form the EGF-like 5 domain. 3 cysteine pairs are disulfide-bonded: Cys2132/Cys2142, Cys2136/Cys2148, and Cys2150/Cys2159. N-linked (GlcNAc...) asparagine glycosylation occurs at Asn2144. Glu2178 provides a ligand contact to Zn(2+). Residues Cys2194 and Cys2234 are joined by a disulfide bond. Residues 2249–2260 (QYSLNGGLSWSL) form a BNR 10 repeat. Position 2263 (Glu2263) interacts with Zn(2+). Asn2268 and Asn2316 each carry an N-linked (GlcNAc...) asparagine glycan. Disulfide bonds link Cys2347–Cys2386, Cys2392–Cys2558, and Cys2543–Cys2583. Residues Glu2396, Glu2398, and His2459 each coordinate Zn(2+). The BNR 11 repeat unit spans residues 2398 to 2409 (EYSVDLGLSWHP). The 32-residue stretch at 2477–2508 (IGDGCIDMCSGHGRCIQGNCVCDEQWGGLYCD) folds into the EGF-like 6 domain. N-linked (GlcNAc...) asparagine glycosylation occurs at Asn2568. 2 BNR repeats span residues 2597–2608 (EYSVNGGITWNL) and 2777–2788 (QYSTDFGVSWNY). 5 disulfide bridges follow: Cys2793–Cys2800, Cys2856–Cys2866, Cys2860–Cys2871, Cys2873–Cys2882, and Cys2918–Cys2965. Residues 2852–2883 (LGPGCLDNCRGHGDCLREQCICDPGYSGPNCY) enclose the EGF-like 7 domain. Asn2961 carries N-linked (GlcNAc...) asparagine glycosylation. One copy of the BNR 14 repeat lies at 2978–2989 (DYSTDGGITWTL). 2 N-linked (GlcNAc...) asparagine glycosylation sites follow: Asn3015 and Asn3072. The stretch at 3142–3154 (EYTKDARSDSWQL) is one BNR 15 repeat. The cysteines at positions 3159 and 3169 are disulfide-linked. N-linked (GlcNAc...) asparagine glycosylation is present at Asn3184. Residues 3227–3259 (IGEACPKLCSGHGYCTTGAICICDESFQGDDCS) enclose the EGF-like 8 domain. 4 disulfides stabilise this stretch: Cys3231–Cys3241, Cys3235–Cys3247, Cys3249–Cys3258, and Cys3295–Cys3345. A BNR 16 repeat occupies 3362 to 3373 (QYSVNNGITWHV). N-linked (GlcNAc...) asparagine glycosylation is found at Asn3411 and Asn3438.

This sequence belongs to the reelin family. Oligomer of disulfide-linked homodimers. In terms of processing, N-glycosylated and to a lesser extent also O-glycosylated. In terms of tissue distribution, abundantly produced during brain ontogenesis by the Cajal-Retzius cells and other pioneer neurons located in the telencephalic marginal zone and by granule cells of the external granular layer of the cerebellum. In adult brain, preferentially expressed in GABAergic interneurons of prefrontal cortices, temporal cortex, hippocampus and glutamatergic granule cells of cerebellum. Expression is reduced to about 50% in patients with schizophrenia. Also expressed in fetal and adult liver.

The protein resides in the secreted. The protein localises to the extracellular space. It is found in the extracellular matrix. Extracellular matrix serine protease secreted by pioneer neurons that plays a role in layering of neurons in the cerebral cortex and cerebellum by coordinating cell positioning during neurodevelopment. Regulates microtubule function in neurons and neuronal migration. Binding to the extracellular domains of lipoprotein receptors VLDLR and LRP8/APOER2 induces tyrosine phosphorylation of DAB1 and modulation of TAU phosphorylation. Affects migration of sympathetic preganglionic neurons in the spinal cord, where it seems to act as a barrier to neuronal migration. Enzymatic activity is important for the modulation of cell adhesion. The sequence is that of Reelin (RELN) from Homo sapiens (Human).